Reading from the N-terminus, the 200-residue chain is MEKPEQKLLLYKLSDRLFAAIQKNLQLERRQALLVKLGIDTVLNVIPKLIITIILALLLHELVPVLVFMGSFLVLRGFAYGRHLESDLLCTILTAVTFVGVPYLIQFTDGIPELFRFILCLLLTVPIGMFSPAVTRKNPIKSQSLKRALKHKAIITSLVFSFLQFLVSNNLGTIIVVSLLLVFTLIVPLKGGKSDEAENV.

Transmembrane regions (helical) follow at residues 49–69, 88–108, 114–134, 148–168, and 171–191; these read LIITIILALLLHELVPVLVFM, LLCTILTAVTFVGVPYLIQFT, LFRFILCLLLTVPIGMFSPAV, ALKHKAIITSLVFSFLQFLVS, and LGTIIVVSLLLVFTLIVPLKG.

This sequence belongs to the AgrB family.

It localises to the cell membrane. In terms of biological role, may be involved in the proteolytic processing of a quorum sensing system signal molecule precursor. The polypeptide is Putative AgrB-like protein (Lactiplantibacillus plantarum (strain ATCC BAA-793 / NCIMB 8826 / WCFS1) (Lactobacillus plantarum)).